Reading from the N-terminus, the 210-residue chain is T-cell antigen CD7 (210 aa).

A signal peptide spans 1–23; sequence MTQQAVLALLLTLAGILPGPLDA. Positions 24–129 constitute an Ig-like domain; sequence QDVHQSPRLT…RGLFTTVVVK (106 aa). At 24–150 the chain is on the extracellular side; it reads QDVHQSPRLT…EPLQTSFSFP (127 aa). 3 N-linked (GlcNAc...) asparagine glycosylation sites follow: Asn42, Asn86, and Asn93. A disulfide bond links Cys45 and Cys111. The helical transmembrane segment at 151-171 threads the bilayer; the sequence is AAIAVGFFFTGLLLGVVCSML. The S-palmitoyl cysteine moiety is linked to residue Cys168. Residues 172-210 lie on the Cytoplasmic side of the membrane; sequence RKIQIKKLCASGIKESPCVVYEDMSYSNRKTPCIPNQYQ.

Interacts with SECTM1.

It localises to the membrane. Functionally, transmembrane glycoprotein expressed by T-cells and natural killer (NK) cells and their precursors. Plays a costimulatory role in T-cell activation upon binding to its ligand K12/SECTM1. In turn, mediates the production of cytokines such as IL-2. On resting NK-cells, CD7 activation results in a significant induction of gamma-interferon levels. This Mus musculus (Mouse) protein is T-cell antigen CD7 (Cd7).